A 244-amino-acid chain; its full sequence is 1-(5-phosphoribosyl)-5-[(5-phosphoribosylamino)methylideneamino] imidazole-4-carboxamide isomerase (244 aa).

Residue D8 is the Proton acceptor of the active site. The active-site Proton donor is the D129.

This sequence belongs to the HisA/HisF family.

It is found in the cytoplasm. It catalyses the reaction 1-(5-phospho-beta-D-ribosyl)-5-[(5-phospho-beta-D-ribosylamino)methylideneamino]imidazole-4-carboxamide = 5-[(5-phospho-1-deoxy-D-ribulos-1-ylimino)methylamino]-1-(5-phospho-beta-D-ribosyl)imidazole-4-carboxamide. The protein operates within amino-acid biosynthesis; L-histidine biosynthesis; L-histidine from 5-phospho-alpha-D-ribose 1-diphosphate: step 4/9. This Allorhizobium ampelinum (strain ATCC BAA-846 / DSM 112012 / S4) (Agrobacterium vitis (strain S4)) protein is 1-(5-phosphoribosyl)-5-[(5-phosphoribosylamino)methylideneamino] imidazole-4-carboxamide isomerase.